The primary structure comprises 296 residues: Formamidopyrimidine-DNA glycosylase (296 aa).

The active-site Schiff-base intermediate with DNA is proline 2. The Proton donor role is filled by glutamate 3. Lysine 58 serves as the catalytic Proton donor; for beta-elimination activity. DNA contacts are provided by histidine 106, arginine 125, and lysine 168. The FPG-type zinc finger occupies 259-295 (RVYDRVGHACPTKGCTGRIGRIVQGGRSTFFCETCQV). Arginine 285 (proton donor; for delta-elimination activity) is an active-site residue.

It belongs to the FPG family. Monomer. It depends on Zn(2+) as a cofactor.

The enzyme catalyses Hydrolysis of DNA containing ring-opened 7-methylguanine residues, releasing 2,6-diamino-4-hydroxy-5-(N-methyl)formamidopyrimidine.. The catalysed reaction is 2'-deoxyribonucleotide-(2'-deoxyribose 5'-phosphate)-2'-deoxyribonucleotide-DNA = a 3'-end 2'-deoxyribonucleotide-(2,3-dehydro-2,3-deoxyribose 5'-phosphate)-DNA + a 5'-end 5'-phospho-2'-deoxyribonucleoside-DNA + H(+). Its function is as follows. Involved in base excision repair of DNA damaged by oxidation or by mutagenic agents. Acts as a DNA glycosylase that recognizes and removes damaged bases. Has a preference for oxidized purines, such as 7,8-dihydro-8-oxoguanine (8-oxoG). Has AP (apurinic/apyrimidinic) lyase activity and introduces nicks in the DNA strand. Cleaves the DNA backbone by beta-delta elimination to generate a single-strand break at the site of the removed base with both 3'- and 5'-phosphates. In Methylorubrum populi (strain ATCC BAA-705 / NCIMB 13946 / BJ001) (Methylobacterium populi), this protein is Formamidopyrimidine-DNA glycosylase.